A 73-amino-acid chain; its full sequence is MPMPKIADARALSDEELSNEIYAVKKELFELRLQQATRQLNQPHLIRLRKHKLAQLLTVEGERKRGKRPTKEE.

Belongs to the universal ribosomal protein uL29 family.

This is Large ribosomal subunit protein uL29 from Synechococcus sp. (strain JA-2-3B'a(2-13)) (Cyanobacteria bacterium Yellowstone B-Prime).